The sequence spans 146 residues: Anti-sigma F factor (146 aa).

Belongs to the anti-sigma-factor family.

The catalysed reaction is L-seryl-[protein] + ATP = O-phospho-L-seryl-[protein] + ADP + H(+). It catalyses the reaction L-threonyl-[protein] + ATP = O-phospho-L-threonyl-[protein] + ADP + H(+). Its function is as follows. Binds to sigma F and blocks its ability to form an RNA polymerase holoenzyme (E-sigma F). Phosphorylates SpoIIAA on a serine residue. This phosphorylation may enable SpoIIAA to act as an anti-anti-sigma factor that counteracts SpoIIAB and thus releases sigma F from inhibition. In Bacillus cytotoxicus (strain DSM 22905 / CIP 110041 / 391-98 / NVH 391-98), this protein is Anti-sigma F factor.